Consider the following 162-residue polypeptide: UPF0114 protein Shewmr4_0646 (162 aa).

4 consecutive transmembrane segments (helical) span residues 15 to 35, 53 to 73, 108 to 128, and 136 to 156; these read IMAP…IKFF, LVLV…IVMV, KVAA…FMDV, and IMWY…MGYL.

It belongs to the UPF0114 family.

The protein localises to the cell membrane. This Shewanella sp. (strain MR-4) protein is UPF0114 protein Shewmr4_0646.